Here is a 273-residue protein sequence, read N- to C-terminus: Zinc finger protein 80 (273 aa).

Residues 49-71 (YKCKECGSVFNKNSLLVRHQQIH) form a C2H2-type 1 zinc finger. A C2H2-type 2; degenerate zinc finger spans residues 77–99 (YEYQECGKAFPEKVDFVRHMRIH). Residues 105–127 (CKCVECRKVFNRRSHLLCYRQIH) form a C2H2-type 3; atypical zinc finger. 4 C2H2-type zinc fingers span residues 133 to 155 (YECS…RVTH), 161 to 183 (FGCK…MKIH), 187 to 211 (KPCK…SMTH), and 217 to 239 (YECK…TRSH).

Belongs to the krueppel C2H2-type zinc-finger protein family.

The protein localises to the nucleus. In terms of biological role, may be involved in transcriptional regulation. This chain is Zinc finger protein 80 (ZNF80), found in Pan troglodytes (Chimpanzee).